The primary structure comprises 1202 residues: Inner capsid protein VP3 (1202 aa).

2 disordered regions span residues 1–45 (MRPI…SGKI) and 73–99 (YTSK…PRVT). Over residues 10–21 (NQERTTTKHQET) the composition is skewed to basic and acidic residues. Residues 27 to 45 (NEQTTSDQRFTRSSNSGKI) show a composition bias toward polar residues.

This sequence belongs to the turreted BTV-fold inner capsid family. As to quaternary structure, homodecamer; each decamer is made up of two conformers of VP2, called VP2A and VP2B. 12 homodecamers assemble to form an icosahedral capsid.

It is found in the virion. Functionally, inner capsid protein that self-assembles to form an icosahedral capsid with a T=2 symmetry, which consists of 120 copies of VP2, with channels at each of its five-fold vertices. This capsid constitutes the innermost concentric layer of the viral mature particle. The polypeptide is Inner capsid protein VP3 (S3) (Aedes pseudoscutellaris reovirus (isolate France) (ApRV)).